Consider the following 539-residue polypeptide: Hydroxylamine reductase (539 aa).

Cys3, Cys6, Cys14, and Cys20 together coordinate [4Fe-4S] cluster. Residues His232, Glu256, Cys300, Cys392, Cys420, Cys445, Glu480, and Lys482 each contribute to the hybrid [4Fe-2O-2S] cluster site. Cys392 carries the post-translational modification Cysteine persulfide.

It belongs to the HCP family. Requires [4Fe-4S] cluster as cofactor. Hybrid [4Fe-2O-2S] cluster serves as cofactor.

The protein resides in the cytoplasm. It catalyses the reaction A + NH4(+) + H2O = hydroxylamine + AH2 + H(+). Its function is as follows. Catalyzes the reduction of hydroxylamine to form NH(3) and H(2)O. The chain is Hydroxylamine reductase from Chlorobaculum tepidum (strain ATCC 49652 / DSM 12025 / NBRC 103806 / TLS) (Chlorobium tepidum).